We begin with the raw amino-acid sequence, 214 residues long: UPF0502 protein Acid345_3645 (214 aa).

The protein belongs to the UPF0502 family.

This Koribacter versatilis (strain Ellin345) protein is UPF0502 protein Acid345_3645.